A 349-amino-acid chain; its full sequence is 4-hydroxythreonine-4-phosphate dehydrogenase (349 aa).

Residue threonine 135 participates in substrate binding. Residues histidine 170, histidine 215, and histidine 276 each coordinate a divalent metal cation. Substrate contacts are provided by lysine 284, asparagine 293, and arginine 302.

It belongs to the PdxA family. Homodimer. It depends on a divalent metal cation as a cofactor.

The protein resides in the cytoplasm. It catalyses the reaction 4-(phosphooxy)-L-threonine + NAD(+) = 3-amino-2-oxopropyl phosphate + CO2 + NADH. It functions in the pathway cofactor biosynthesis; pyridoxine 5'-phosphate biosynthesis; pyridoxine 5'-phosphate from D-erythrose 4-phosphate: step 4/5. Catalyzes the NAD(P)-dependent oxidation of 4-(phosphooxy)-L-threonine (HTP) into 2-amino-3-oxo-4-(phosphooxy)butyric acid which spontaneously decarboxylates to form 3-amino-2-oxopropyl phosphate (AHAP). In Synechococcus sp. (strain JA-3-3Ab) (Cyanobacteria bacterium Yellowstone A-Prime), this protein is 4-hydroxythreonine-4-phosphate dehydrogenase.